We begin with the raw amino-acid sequence, 288 residues long: Putative hydrolase LipZ (288 aa).

The protein belongs to the AB hydrolase superfamily.

This is Putative hydrolase LipZ from Mycobacterium tuberculosis (strain CDC 1551 / Oshkosh).